The chain runs to 204 residues: Sperm acrosome developmental regulator (204 aa).

Ser65 carries the phosphoserine modification. Basic residues predominate over residues 172-184 (RRQERRRRHHLRA). The segment at 172–204 (RRQERRRRHHLRAHMGPQPDPAQGLKQDARSPL) is disordered.

Its subcellular location is the cytoplasmic vesicle. It is found in the secretory vesicle. The protein resides in the acrosome. In terms of biological role, may play an important role in acrosome formation and nucleus shaping during spermiogenesis. The sequence is that of Sperm acrosome developmental regulator (SPACDR) from Bos taurus (Bovine).